Reading from the N-terminus, the 296-residue chain is UDP-N-acetylenolpyruvoylglucosamine reductase (296 aa).

Residues 26–191 (RIGGPANYFK…LSATFRLSKS (166 aa)) enclose the FAD-binding PCMH-type domain. The active site involves Arg-170. The active-site Proton donor is Cys-218. Glu-287 is an active-site residue.

This sequence belongs to the MurB family. It depends on FAD as a cofactor.

It is found in the cytoplasm. It carries out the reaction UDP-N-acetyl-alpha-D-muramate + NADP(+) = UDP-N-acetyl-3-O-(1-carboxyvinyl)-alpha-D-glucosamine + NADPH + H(+). The protein operates within cell wall biogenesis; peptidoglycan biosynthesis. In terms of biological role, cell wall formation. The sequence is that of UDP-N-acetylenolpyruvoylglucosamine reductase from Chlamydia felis (strain Fe/C-56) (Chlamydophila felis).